The sequence spans 241 residues: Synaptogyrin (241 aa).

The 150-residue stretch at F30–L179 folds into the MARVEL domain. Transmembrane regions (helical) follow at residues P34–S54, M81–E101, A115–W135, and T155–Y175. The segment at A216 to Y241 is disordered. Residues G220–Y241 are compositionally biased toward low complexity.

The protein belongs to the synaptogyrin family.

Its subcellular location is the cytoplasmic vesicle membrane. The protein resides in the cytoplasmic vesicle. It localises to the secretory vesicle membrane. The protein localises to the secretory vesicle. It is found in the synaptic vesicle membrane. In terms of biological role, required for the correct formation of synaptic vesicles at nerve terminals and has a role in the regulation of the synaptic vesicle exo-endocytic cycle. The sequence is that of Synaptogyrin from Drosophila melanogaster (Fruit fly).